We begin with the raw amino-acid sequence, 200 residues long: Membrane-spanning 4-domains subfamily A member 5 (200 aa).

The Cytoplasmic segment spans residues 1–52 (MDSSTAHSPVFLVFPPEITASEYESTELSATTFSTQSPLQKLFARKMKILGT). The chain crosses the membrane as a helical span at residues 53–73 (IQILFGIMTFSFGVIFLFTLL). Residues 74–80 (KPYPRFP) are Extracellular-facing. Residues 81 to 101 (FIFLSGYPFWGSVLFINSGAF) form a helical membrane-spanning segment. Over 102 to 120 (LIAVKRKTTETLIILSRIM) the chain is Cytoplasmic. The chain crosses the membrane as a helical span at residues 121–141 (NFLSALGAIAGIILLTFGFIL). Residues 142-159 (DQNYICGYSHQNSQCKAV) lie on the Extracellular side of the membrane. The chain crosses the membrane as a helical span at residues 160–180 (TVLFLGILITLMTFSIIELFI). Residues 181–200 (SLPFSILGCHSEDCDCEQCC) lie on the Cytoplasmic side of the membrane.

The protein belongs to the MS4A family. Expressed at high level in the testis. Detected also in the pancreas, heart and in the brain.

Its subcellular location is the membrane. Its function is as follows. May be involved in signal transduction as a component of a multimeric receptor complex. The protein is Membrane-spanning 4-domains subfamily A member 5 (MS4A5) of Homo sapiens (Human).